We begin with the raw amino-acid sequence, 159 residues long: MRCPKCQHNKSNVIDSRQAEDGNTIRRRRECDACHARFTTFERVEEVPLLVVKKDGTREQFSRDKIFNGILMSAQKRPVSSEDIENAITRIEQNIRRNHDGEVDSEVIGNLVMKELADLDEITYVRFASVYRSFKDVDEIEELLQEITKTVRAKKESKK.

A disordered region spans residues 1-21; it reads MRCPKCQHNKSNVIDSRQAED. A zinc finger spans residues 3–34; the sequence is CPKCQHNKSNVIDSRQAEDGNTIRRRRECDAC. The 91-residue stretch at 49–139 folds into the ATP-cone domain; it reads LLVVKKDGTR…VYRSFKDVDE (91 aa).

This sequence belongs to the NrdR family. Requires Zn(2+) as cofactor.

Functionally, negatively regulates transcription of bacterial ribonucleotide reductase nrd genes and operons by binding to NrdR-boxes. The polypeptide is Transcriptional repressor NrdR (Streptococcus thermophilus (strain CNRZ 1066)).